Reading from the N-terminus, the 577-residue chain is PTS system lactose-specific EIICB component (577 aa).

The 402-residue stretch at 4-405 (VFDKLKPVFE…VLDVAIYFPF (402 aa)) folds into the PTS EIIC type-3 domain. 9 consecutive transmembrane segments (helical) span residues 27–47 (GFIA…VAYV), 63–83 (LMVA…GTTA), 100–120 (INPV…SILP), 133–153 (QGLI…YVCI), 176–196 (LIPM…FKAA), 219–239 (YLGL…GVQG), 280–300 (VMNF…LFAA), 326–346 (FGMP…TPIV), and 386–406 (LAFV…FPFI). Positions 476–577 (EVDVLVLCAG…MALDFVESNL (102 aa)) constitute a PTS EIIB type-3 domain. Cysteine 483 serves as the catalytic Phosphocysteine intermediate; for EIIB activity. At cysteine 483 the chain carries Phosphocysteine; by EIIA.

Its subcellular location is the cell membrane. The catalysed reaction is lactose(out) + N(pros)-phospho-L-histidyl-[protein] = lactose 6-phosphate(in) + L-histidyl-[protein]. The phosphoenolpyruvate-dependent sugar phosphotransferase system (sugar PTS), a major carbohydrate active transport system, catalyzes the phosphorylation of incoming sugar substrates concomitantly with their translocation across the cell membrane. The enzyme II LacEF PTS system is involved in lactose transport. The polypeptide is PTS system lactose-specific EIICB component (Lacticaseibacillus casei (Lactobacillus casei)).